Here is a 196-residue protein sequence, read N- to C-terminus: MTVGVLALQGAFREHRQRLEQLGAGVREVRLPADLAGLSGLILPGGESTTMVRLLTEGGLWHPLRDFHAAGGALWGTCAGAIVLAREVMGGSPSLPPQPGLGLLDITVQRNAFGRQVDSFTAPLDIAGLDAPFPAVFIRAPVITRVGPAARALATLGDRTAHVQQGRVLASAFHPELTEDTRLHRVFLGLAGERAY.

An L-glutamine-binding site is contributed by 46–48; the sequence is GES. C78 (nucleophile) is an active-site residue. Residues R110 and 138-139 each bind L-glutamine; that span reads IR. Catalysis depends on charge relay system residues H174 and E176.

Belongs to the glutaminase PdxT/SNO family. In the presence of PdxS, forms a dodecamer of heterodimers. Only shows activity in the heterodimer.

The enzyme catalyses aldehydo-D-ribose 5-phosphate + D-glyceraldehyde 3-phosphate + L-glutamine = pyridoxal 5'-phosphate + L-glutamate + phosphate + 3 H2O + H(+). The catalysed reaction is L-glutamine + H2O = L-glutamate + NH4(+). It participates in cofactor biosynthesis; pyridoxal 5'-phosphate biosynthesis. Its function is as follows. Catalyzes the hydrolysis of glutamine to glutamate and ammonia as part of the biosynthesis of pyridoxal 5'-phosphate. The resulting ammonia molecule is channeled to the active site of PdxS. The sequence is that of Pyridoxal 5'-phosphate synthase subunit PdxT from Deinococcus radiodurans (strain ATCC 13939 / DSM 20539 / JCM 16871 / CCUG 27074 / LMG 4051 / NBRC 15346 / NCIMB 9279 / VKM B-1422 / R1).